A 1170-amino-acid chain; its full sequence is MAAALGASGGAGAGDDDFDQFDKPGAERSWRRRAADEDWDSELEDDLLGEDLLSGKKNQSDLSDEELNDDLLQSDNEDEENFSSQGVTISLNATSGMVTSFELSDNTNDQSGEQESEYEQEQGEDELVYHKSDGSELYTQEYPEEGQYEGHEAELTEDQIEYVEEPEEEQLYTDEVLDIEINEPLDEFTGGMETLELQKDIKEESDEEEEDDEESGRLRFKTERKEGTIIRLSDVTRERRNIPETLELSAEAKAALLEFEERERQHKQGRYSSRRGGRRGGPLMCRGVGDQRRESTERGRMKDHRPALLPTQPPVVPQAPPPPPPPPQQQPIRSLFQPQPLQPLLPVQHPHHPSPPQGMHMPPQLETPRMMMTPPPVTPQQPKNIHINPHFKGTVVTPVQVPLLPVPSQPRPAVGPQRFPGPPEFPQHTPGPVPNSFSQPPRLPLQDQWRAPPPPQDRDPFFLGVSGEPRFPSHLFLEQRSPPPPPPPPTLLNSSHPVPTQSPLPFTQPGPAFNQQGQQPVFPRERPVRPALQPPGPVGILHFSQPGSATTRPFIPPRQPFLPGPGQPFLPTHTQPNLQGPLHPPLPPPHQPQPQQPQQQPPPQHQPPHQPPHQPPPQHQPPPQHPPQHPPQHQHHHHHHHLSVPPPPLMPMSQPQFRPHVQTAQPQASSSRMQCPQRQGLRHNTTSQNVSKRPMQQMQPTAPRNSNLRELPIAPSHVIEMSSSRCSATPSAQVKPIVSASPPSRAVAGSRSSQGKTEVKVKPASPVAQPKEEAKTETEFPDEDEETRLYRLKIEEQKRLREEILKQKELRRQQQAGARKKELLERLAQQQQQLYAPPPPAEQEEQALSPSPTNGNPLLPFPGAQVRQNVKNRLLVKNQDVSISNVQPKTSNFVPSSANMQYQGQQMKALKHLRQTRTVPQSQTQPLHKVLPIKPADVEEPAVPQTPRVASIQGRPQDTKPGVKRTVTHRTNSGGGDGPHISSKVRVIKLSGGGGESDGFFHPEGQPQRLPQPPEVGPQPARKVTLTRGGLQQPPHLPAGPHAHSPVPPGIKSIQGIHPAKKAIMHGRGRGVAGPMGRGRLMPNKQNLRVVECKPQPCVVSVEGLSSSTTDAQLKSLLMSVGPIQSLQMLPQQRKAIAKFKEPAHALAFQQKFHRHMIDLSHINVALIVE.

2 disordered regions span residues 1–152 (MAAA…EGHE) and 199–221 (KDIK…LRFK). Alanine 2 is modified (N-acetylalanine). Over residues 20-36 (QFDKPGAERSWRRRAAD) the composition is skewed to basic and acidic residues. Residues 37–49 (EDWDSELEDDLLG) are compositionally biased toward acidic residues. Phosphoserine is present on serine 41. Residues 82-108 (FSSQGVTISLNATSGMVTSFELSDNTN) show a composition bias toward polar residues. Acidic residues-rich tracts occupy residues 112-126 (GEQE…GEDE) and 203-214 (EESDEEEEDDEE). Residues serine 205 and serine 233 each carry the phosphoserine modification. 4 disordered regions span residues 259–708 (FEER…NSNL), 721–784 (MSSS…PDED), 833–863 (QLYA…PFPG), and 942–1050 (AVPQ…VPPG). Basic residues predominate over residues 267 to 278 (KQGRYSSRRGGR). Residues 289-306 (GDQRRESTERGRMKDHRP) show a composition bias toward basic and acidic residues. The segment covering 311–329 (TQPPVVPQAPPPPPPPPQQ) has biased composition (pro residues). 3 stretches are compositionally biased toward low complexity: residues 335–348 (LFQP…LPVQ), 357–372 (QGMH…RMMM), and 394–403 (TVVTPVQVPL). Positions 419–433 (FPGPPEFPQHTPGPV) are enriched in pro residues. Arginine 470 is modified (asymmetric dimethylarginine). 3 stretches are compositionally biased toward pro residues: residues 481-490 (SPPPPPPPPT), 554-568 (FIPP…PGQP), and 582-630 (LHPP…PQHP). Positions 632-642 (QHQHHHHHHHL) are enriched in basic residues. Composition is skewed to polar residues over residues 662–708 (QTAQ…NSNL) and 721–732 (MSSSRCSATPSA). Residues serine 741 and serine 765 each carry the phosphoserine modification. Residues 789–835 (LYRLKIEEQKRLREEILKQKELRRQQQAGARKKELLERLAQQQQQLY) are a coiled coil. Serine 951 is modified (phosphoserine). Lysine 960 is covalently cross-linked (Glycyl lysine isopeptide (Lys-Gly) (interchain with G-Cter in SUMO2)). Phosphoserine is present on residues serine 973 and serine 991. Arginine 1028 is subject to Asymmetric dimethylarginine; alternate. Arginine 1028 bears the Omega-N-methylarginine; alternate mark. An RRM domain is found at 1098-1170 (CVVSVEGLSS…SHINVALIVE (73 aa)).

Associates with the NXF1-NXT1 RNA export complex. Interacts with ALKBH5; facilitating ALKBH5 recruitment to m6A-containing transcripts. Interacts with SENP1; promoting ALKBH5 deSUMOylation and subsequent activation.

The protein resides in the nucleus. It is found in the cytoplasm. RNA reader protein, which recognizes and binds specific RNAs, thereby regulating RNA metabolic processes, such as mRNA export, mRNA stability and/or translation. Binds a subset of intronless RNAs containing GC-rich elements, such as NORAD, and promotes their nuclear export by recruiting target RNAs to components of the NXF1-NXT1 RNA export machinery. Specifically recognizes and binds N6-methyladenosine (m6A)-containing mRNAs, promoting their demethylation by ALKBH5. Acts as an molecular adapter, which (1) promotes ALKBH5 recruitment to m6A-containing transcripts and (2) activates ALKBH5 demethylase activity by recruiting SENP1, leading to ALKBH5 deSUMOylation and subsequent activation. The polypeptide is RNA-binding protein 33 (Homo sapiens (Human)).